Consider the following 407-residue polypeptide: Methylenetetrahydrofolate--tRNA-(uracil-5-)-methyltransferase TrmFO (407 aa).

9-14 (GAGLAG) is an FAD binding site.

This sequence belongs to the MnmG family. TrmFO subfamily. Requires FAD as cofactor.

It is found in the cytoplasm. It carries out the reaction uridine(54) in tRNA + (6R)-5,10-methylene-5,6,7,8-tetrahydrofolate + NADH + H(+) = 5-methyluridine(54) in tRNA + (6S)-5,6,7,8-tetrahydrofolate + NAD(+). It catalyses the reaction uridine(54) in tRNA + (6R)-5,10-methylene-5,6,7,8-tetrahydrofolate + NADPH + H(+) = 5-methyluridine(54) in tRNA + (6S)-5,6,7,8-tetrahydrofolate + NADP(+). Functionally, catalyzes the folate-dependent formation of 5-methyl-uridine at position 54 (M-5-U54) in all tRNAs. This chain is Methylenetetrahydrofolate--tRNA-(uracil-5-)-methyltransferase TrmFO, found in Lactobacillus helveticus (strain DPC 4571).